The following is a 267-amino-acid chain: MIKVAVNGAAGRMGGRLITAIKETEGLQLTGALEHAESPMLGQDAGLTAGCGPLDVLISSDLDEVLKATDVLIDFTFPEVSLRNLEACVRHDKSIVIGSTGFTPEQRARVDEMAQNIPVVLAPNMSVGVNACFKLLKEAAQILGDGFDVEIVELHHNKKKDSPSGTAVRMGEIVADALGRDYNKSAVYHREGMCGARTPEEIGMQTVRGGDIVGEHTVYFIGMGERIEITHRAMSRDMFARGAVRAASWLAGKAPGLYDMQDILGLK.

NAD(+)-binding positions include 8–13, Glu-34, 98–100, and 122–125; these read GAAGRM, GST, and APNM. The Proton donor/acceptor role is filled by His-155. His-156 provides a ligand contact to (S)-2,3,4,5-tetrahydrodipicolinate. Residue Lys-159 is the Proton donor of the active site. (S)-2,3,4,5-tetrahydrodipicolinate is bound at residue 165-166; the sequence is GT.

This sequence belongs to the DapB family.

The protein resides in the cytoplasm. It carries out the reaction (S)-2,3,4,5-tetrahydrodipicolinate + NAD(+) + H2O = (2S,4S)-4-hydroxy-2,3,4,5-tetrahydrodipicolinate + NADH + H(+). The enzyme catalyses (S)-2,3,4,5-tetrahydrodipicolinate + NADP(+) + H2O = (2S,4S)-4-hydroxy-2,3,4,5-tetrahydrodipicolinate + NADPH + H(+). It participates in amino-acid biosynthesis; L-lysine biosynthesis via DAP pathway; (S)-tetrahydrodipicolinate from L-aspartate: step 4/4. Catalyzes the conversion of 4-hydroxy-tetrahydrodipicolinate (HTPA) to tetrahydrodipicolinate. The protein is 4-hydroxy-tetrahydrodipicolinate reductase of Syntrophotalea carbinolica (strain DSM 2380 / NBRC 103641 / GraBd1) (Pelobacter carbinolicus).